A 171-amino-acid chain; its full sequence is Adenine phosphoribosyltransferase (171 aa).

The protein belongs to the purine/pyrimidine phosphoribosyltransferase family. As to quaternary structure, homodimer.

The protein localises to the cytoplasm. It catalyses the reaction AMP + diphosphate = 5-phospho-alpha-D-ribose 1-diphosphate + adenine. The protein operates within purine metabolism; AMP biosynthesis via salvage pathway; AMP from adenine: step 1/1. In terms of biological role, catalyzes a salvage reaction resulting in the formation of AMP, that is energically less costly than de novo synthesis. The polypeptide is Adenine phosphoribosyltransferase (Acidiphilium cryptum (strain JF-5)).